Here is a 480-residue protein sequence, read N- to C-terminus: Protein nucleotidyltransferase YdiU (480 aa).

ATP contacts are provided by Gly-86, Gly-88, Arg-89, Lys-109, Asp-121, Gly-122, Arg-172, and Arg-179. Asp-248 serves as the catalytic Proton acceptor. The Mg(2+) site is built by Asn-249 and Asp-258. Residue Asp-258 participates in ATP binding.

The protein belongs to the SELO family. Mg(2+) serves as cofactor. Mn(2+) is required as a cofactor.

The catalysed reaction is L-seryl-[protein] + ATP = 3-O-(5'-adenylyl)-L-seryl-[protein] + diphosphate. It catalyses the reaction L-threonyl-[protein] + ATP = 3-O-(5'-adenylyl)-L-threonyl-[protein] + diphosphate. It carries out the reaction L-tyrosyl-[protein] + ATP = O-(5'-adenylyl)-L-tyrosyl-[protein] + diphosphate. The enzyme catalyses L-histidyl-[protein] + UTP = N(tele)-(5'-uridylyl)-L-histidyl-[protein] + diphosphate. The catalysed reaction is L-seryl-[protein] + UTP = O-(5'-uridylyl)-L-seryl-[protein] + diphosphate. It catalyses the reaction L-tyrosyl-[protein] + UTP = O-(5'-uridylyl)-L-tyrosyl-[protein] + diphosphate. Its function is as follows. Nucleotidyltransferase involved in the post-translational modification of proteins. It can catalyze the addition of adenosine monophosphate (AMP) or uridine monophosphate (UMP) to a protein, resulting in modifications known as AMPylation and UMPylation. This chain is Protein nucleotidyltransferase YdiU, found in Salmonella agona (strain SL483).